The sequence spans 1504 residues: NAC-alpha domain-containing protein 1 (1504 aa).

Disordered stretches follow at residues 127 to 150 (KPGA…ASAW), 208 to 261 (DREG…HGPH), 315 to 356 (PSDW…SSWS), 396 to 436 (LPQE…STSA), 460 to 525 (DTSA…TNSQ), 539 to 565 (GLES…TPTV), 701 to 812 (VLPP…EEGV), 834 to 1064 (DLES…LPVA), 1099 to 1366 (PFQH…AMSK), and 1430 to 1467 (PSEP…GLEP). The span at 342 to 354 (SSESSLSADSSSS) shows a compositional bias: low complexity. Residues 398 to 407 (QEEEEDEEDV) show a composition bias toward acidic residues. 2 stretches are compositionally biased toward low complexity: residues 408–422 (AATA…ATPD) and 462–475 (SAAS…SYAG). Residues 510-525 (STPQTSEQEICLTNSQ) are compositionally biased toward polar residues. Positions 775 to 792 (PQESPTASSLTLQSSHPT) are enriched in polar residues. The segment covering 930-939 (PPASNQAQQN) has biased composition (low complexity). Residues 958–968 (STLSTKTSEPT) are compositionally biased toward polar residues. Over residues 989 to 1005 (EAHDGVKTHSPQREALR) the composition is skewed to basic and acidic residues. Position 998 is a phosphoserine (Ser998). A compositionally biased stretch (polar residues) spans 1016–1031 (SPGQGNGPKSATSQGA). Over residues 1159 to 1171 (PGPPDPCLCPPPQ) the composition is skewed to pro residues. Polar residues predominate over residues 1213-1222 (VSLSPHSTLN). At Ser1268 the chain carries Phosphoserine. Residues 1354–1419 (SRSEKKARKA…AKIEDLSQQV (66 aa)) enclose the NAC-A/B domain. Acidic residues predominate over residues 1451–1464 (EEQEEEDEEVEEAG).

Belongs to the NAC-alpha family.

It localises to the cytoplasm. Its subcellular location is the nucleus. Functionally, may prevent inappropriate targeting of non-secretory polypeptides to the endoplasmic reticulum (ER). May bind to nascent polypeptide chains as they emerge from the ribosome and block their interaction with the signal recognition particle (SRP), which normally targets nascent secretory peptides to the ER. May also reduce the inherent affinity of ribosomes for protein translocation sites in the ER membrane (M sites). The chain is NAC-alpha domain-containing protein 1 (Nacad) from Mus musculus (Mouse).